The sequence spans 877 residues: Hopanoid transporter HpnN (877 aa).

The Cytoplasmic portion of the chain corresponds to 1 to 16 (MVTSLIVRLVAWSVRR). A helical transmembrane segment spans residues 17–37 (PVWVVVLSLLIAAFSGVYVAR). Over 38 to 279 (HFKINTDISK…FSSVEDGAAL (242 aa)) the chain is Periplasmic. A helical transmembrane segment spans residues 280–295 (NGVVTLLVVFVILWLA). Over 296-299 (LRSK) the chain is Cytoplasmic. A helical membrane pass occupies residues 300–323 (RMIASVLVTLFVGLVVTAALGLAM). In terms of domain architecture, SSD spans 302–428 (IASVLVTLFV…LTLLPALLRL (127 aa)). At 324–332 (VGSLNMISV) the chain is on the periplasmic side. A helical transmembrane segment spans residues 333–351 (AFMVLFVGLGVDFSIQYGV). Topologically, residues 352-373 (KYREERFRDERIDHALIGAAHS) are cytoplasmic. A helical transmembrane segment spans residues 374-394 (MGMPLALATTAVAASFFSFIP). The Periplasmic portion of the chain corresponds to 395-399 (TAYRG). A helical membrane pass occupies residues 400 to 426 (VSELGLIAGVGMFVALLTTLTLLPALL). The Cytoplasmic segment spans residues 427–452 (RLFAPPGESKTPGFPWLAPVDDYLDR). Residues 453–472 (HRKPILIGTLAVVIGALPLL) form a helical membrane-spanning segment. At 473–718 (AFLHFDFNPL…ILHSANTIIS (246 aa)) the chain is on the periplasmic side. The chain crosses the membrane as a helical span at residues 719 to 739 (AFLHAALWSIISITILLWITL). The Cytoplasmic portion of the chain corresponds to 740 to 743 (RRFG). The chain crosses the membrane as a helical span at residues 744 to 766 (DVLRTLVPLLVSGIVTLEMCVVL). The Periplasmic segment spans residues 767-774 (GMSLNFAN). A helical membrane pass occupies residues 775–794 (IIALPLMLGVGVAFKVYFVM). Over 795 to 809 (AWRAGQTGLLHSSLT) the chain is Cytoplasmic. Residues 810-827 (HAVLFSAATTATAFGSLW) form a helical membrane-spanning segment. At 828–836 (LSHHPGTSS) the chain is on the periplasmic side. A helical membrane pass occupies residues 837–858 (MGKLLALALTCTLIGAVVFQPV). Over 859-877 (LMGKPRVKRAKNQSQGINE) the chain is Cytoplasmic.

The protein belongs to the resistance-nodulation-cell division (RND) (TC 2.A.6) family. MmpL subfamily. Homodimer.

The protein resides in the cell inner membrane. Essential for hopanoid transport from the cytoplasmic to the outer membrane. Is capable of shuttling hopanoid lipids from the inner membrane to the periplasm, where they probably spontaneously insert to the inner leaflet of the outer membrane, strengthening the cell envelope. May be a proton-motive-force (PMF)-dependent transporter. Is critical for multidrug resistance and cell wall remodeling in Burkholderia. This is Hopanoid transporter HpnN from Burkholderia multivorans (strain ATCC 17616 / 249).